A 168-amino-acid polypeptide reads, in one-letter code: Photosystem I assembly protein Ycf3 (168 aa).

TPR repeat units lie at residues 35–68, 72–105, and 120–153; these read AFTY…EIDP, SYIL…NPFL, and GEQA…TPGN.

It belongs to the Ycf3 family.

It localises to the plastid. It is found in the chloroplast thylakoid membrane. In terms of biological role, essential for the assembly of the photosystem I (PSI) complex. May act as a chaperone-like factor to guide the assembly of the PSI subunits. This Panax ginseng (Korean ginseng) protein is Photosystem I assembly protein Ycf3.